We begin with the raw amino-acid sequence, 563 residues long: MIKSTNIQVIGSGIMHQINNIHSLTLFSLPVSLSPSCNEYYLKVWSEWERNGTPGEQRNIAFNRLKICLQNQEAELNLSELDLKTLPDLPPQITTLEIRKNLLTHLPDLPPMLKVIHAQFNQLESLPALPETLEELNAGDNKIKELPFLPENLTHLRVHNNRLHILPLLPPELKLLVVSGNRLDSIPPFPDKLEGLALANNFIEQLPELPFSMNRAVLMNNNLTTLPESVLRLAQNAFVNVAGNPLSGHTMRTLQQITTGPDYSGPQIFFSMGNSATISAPEHSLADAVTAWFPENKQSDVSQIWHAFEHEEHANTFSAFLDRLSDTVSARNTSGFREQVAAWLEKLSASAELRQQSFAVAADATESCEDRVALTWNNLRKTLLVHQASEGLFDNDTGALLSLGREMFRLEILEDIARDKVRTLHFVDEIEVYLAFQTMLAEKLQLSTAVKEMRFYGVSGVTANDLRTAEAMVRSREENEFTDWFSLWGPWHAVLKRTEADRWAQAEEQKYEMLENEYSQRVADRLKASGLSGDADAEREAGAQVMRETEQQIYRQLTDEVLA.

Positions 1-270 are interaction with target proteins; sequence MIKSTNIQVI…PDYSGPQIFF (270 aa). LRR repeat units lie at residues 69 to 90, 91 to 115, 117 to 130, 131 to 150, 151 to 170, 171 to 195, 197 to 209, and 210 to 233; these read LQNQEAELNLSELDLKTLPDLP, PQITTLEIRKNLLTHLPDLPPMLKV, HAQFNQLESLPALP, ETLEELNAGDNKIKELPFLP, ENLTHLRVHNNRLHILPLLP, PELKLLVVSGNRLDSIPPFPDKLEG, ALANNFIEQLPEL, and PFSMNRAVLMNNNLTTLPESVLRL. Residues 271–281 are linker; that stretch reads SMGNSATISAP. The interval 282–563 is E3 ubiquitin-protein ligase catalytic domain; that stretch reads EHSLADAVTA…YRQLTDEVLA (282 aa). Positions 284 to 563 constitute an NEL domain; that stretch reads SLADAVTAWF…YRQLTDEVLA (280 aa). Cys368 acts as the Glycyl thioester intermediate in catalysis.

This sequence belongs to the LRR-containing bacterial E3 ligase family. In terms of assembly, interacts with human RBCK1/HOIL-1 and RNF31/HOIP components of the LUBAC complex. Ubiquitinated in the presence of host E1 ubiquitin-activating enzyme, E2 ubiquitin-conjugating enzyme and ubiquitin.

Its subcellular location is the secreted. It is found in the host cytoplasm. The catalysed reaction is S-ubiquitinyl-[E2 ubiquitin-conjugating enzyme]-L-cysteine + [acceptor protein]-L-lysine = [E2 ubiquitin-conjugating enzyme]-L-cysteine + N(6)-ubiquitinyl-[acceptor protein]-L-lysine.. It functions in the pathway protein modification; protein ubiquitination. Exists in an autoinhibited state in the absence of substrate protein, probably due to interactions of the leucine-rich repeat domain with the catalytic domain. Is activated upon binding to a substrate protein. Its function is as follows. E3 ubiquitin-protein ligase effector that inhibits host cell innate immunity during bacterial infection by catalyzing 'Lys-48'-linked polyubiquitination and subsequent degradation of host RNF31/HOIP. Host RNF31/HOIP is the catalytic component of the LUBAC complex, which conjugates linear ('Met-1'-linked) polyubiquitin chains at the surface of bacteria invading the host cytosol to form the ubiquitin coat surrounding bacteria. The bacterial ubiquitin coat acts as an 'eat-me' signal for xenophagy and promotes NF-kappa-B activation. This chain is E3 ubiquitin-protein ligase IpaH2.5, found in Shigella flexneri.